The primary structure comprises 463 residues: Chitobiosyldiphosphodolichol beta-mannosyltransferase (463 aa).

Topologically, residues 1–3 (MKA) are lumenal. A helical membrane pass occupies residues 4 to 24 (WHWSVTLVVIYLAIPVILYLL). Over 25–105 (TRKDDRKPLS…PLILNTRKLP (81 aa)) the chain is Cytoplasmic. The helical intramembrane region spans 106–126 (FVVFGILKVIRQHWLLISLLY). The Lumenal portion of the chain corresponds to 127–463 (KLRGADYLLV…FSSSSSDDDH (337 aa)).

Belongs to the glycosyltransferase group 1 family.

It localises to the endoplasmic reticulum membrane. The enzyme catalyses an N,N'-diacetylchitobiosyl-diphospho-di-trans,poly-cis-dolichol + GDP-alpha-D-mannose = a beta-D-Man-(1-&gt;4)-beta-D-GlcNAc-(1-&gt;4)-alpha-D-GlcNAc-diphospho-di-trans,poly-cis-dolichol + GDP + H(+). It functions in the pathway protein modification; protein glycosylation. In terms of biological role, participates in the formation of the lipid-linked precursor oligosaccharide for N-glycosylation. Involved in assembling the dolichol-pyrophosphate-GlcNAc(2)-Man(5) intermediate on the cytoplasmic surface of the ER. The sequence is that of Chitobiosyldiphosphodolichol beta-mannosyltransferase (ALG1) from Yarrowia lipolytica (strain CLIB 122 / E 150) (Yeast).